The sequence spans 273 residues: MAKGTVGLFDSGVGGLTVVREVSVILPGKRVIYFGDTAHVPYGDKSVDELLSYAERIIGFLCSQGADYIIFACNTSSAVSLRLMRDRFQVPMIGLIEPGAAEAVRLSATGRIGLIATEATVKAGAYARAVSALNRNCQVFSQAAPRLVPLVESGESDTPKAEQAVREYLEPLREQGIDTLILGCTHYPFLRDVIERVLGPEVVLVDPAAATVRAARLDMLRRGFSADNPGAQGEQDTVSLRYFVSGSADAFRAVAGQFLGREPEPVTEICLLR.

Substrate-binding positions include 10–11 (DS) and 42–43 (YG). Cys73 functions as the Proton donor/acceptor in the catalytic mechanism. 74-75 (NT) lines the substrate pocket. Catalysis depends on Cys184, which acts as the Proton donor/acceptor. Position 185–186 (185–186 (TH)) interacts with substrate.

The protein belongs to the aspartate/glutamate racemases family.

The enzyme catalyses L-glutamate = D-glutamate. It participates in cell wall biogenesis; peptidoglycan biosynthesis. In terms of biological role, provides the (R)-glutamate required for cell wall biosynthesis. The protein is Glutamate racemase of Desulforudis audaxviator (strain MP104C).